Here is a 1137-residue protein sequence, read N- to C-terminus: Nonsense-mediated mRNA decay factor SMG7 (1137 aa).

Ser-2 is modified (N-acetylserine). TPR repeat units follow at residues 152–185 (QHCL…VPSN) and 187–219 (QPYN…KFPF). Ser-520 is modified (phosphoserine). Over residues 620–631 (ELRKTPVSEARK) the composition is skewed to basic and acidic residues. Disordered regions lie at residues 620 to 646 (ELRK…NSQF), 696 to 794 (LQPT…YQQA), 890 to 911 (IDRR…VPRM), 988 to 1055 (PSLP…AMGG), 1069 to 1089 (SSWH…PSME), and 1104 to 1137 (SSSM…NPPH). Phosphothreonine is present on Thr-624. Composition is skewed to polar residues over residues 633 to 646 (PVTQ…NSQF) and 696 to 722 (LQPT…SQQR). The segment covering 723–770 (PSGPGPMNQGPQQSQPPSQQPLTSLPAQPTAQSTSQLQVQALTQQQQS) has biased composition (low complexity). Ser-781 and Ser-897 each carry phosphoserine. The segment covering 988–998 (PSLPASSDHST) has biased composition (polar residues). Low complexity predominate over residues 999-1025 (PASQSPHSSNPSSLPSSPPTHNHNSVP). Residues 1036–1050 (DNRDRRTADRWKTDK) show a composition bias toward basic and acidic residues. A compositionally biased stretch (polar residues) spans 1069 to 1081 (SSWHQASTPSGTW). Over residues 1117-1131 (QLLMQQKQKQQRGQG) the composition is skewed to low complexity.

Part of a complex that contains SMG5, SMG7, PPP2CA, a short isoform of UPF3A (isoform UPF3AS, but not isoform UPF3AL) and phosphorylated UPF1. Interacts with DHX34; the interaction is RNA-independent.

It is found in the cytoplasm. It localises to the nucleus. Its function is as follows. Plays a role in nonsense-mediated mRNA decay. Recruits UPF1 to cytoplasmic mRNA decay bodies. Together with SMG5 is thought to provide a link to the mRNA degradation machinery involving exonucleolytic pathways, and to serve as an adapter for UPF1 to protein phosphatase 2A (PP2A), thereby triggering UPF1 dephosphorylation. The chain is Nonsense-mediated mRNA decay factor SMG7 from Homo sapiens (Human).